Reading from the N-terminus, the 116-residue chain is NADPH-dependent 7-cyano-7-deazaguanine reductase (116 aa).

Catalysis depends on Cys-31, which acts as the Thioimide intermediate. Asp-38 (proton donor) is an active-site residue. Residues 53–55 (VEL) and 72–73 (YE) each bind substrate.

This sequence belongs to the GTP cyclohydrolase I family. QueF type 1 subfamily.

The protein resides in the cytoplasm. The enzyme catalyses 7-aminomethyl-7-carbaguanine + 2 NADP(+) = 7-cyano-7-deazaguanine + 2 NADPH + 3 H(+). Its pathway is tRNA modification; tRNA-queuosine biosynthesis. Catalyzes the NADPH-dependent reduction of 7-cyano-7-deazaguanine (preQ0) to 7-aminomethyl-7-deazaguanine (preQ1). The protein is NADPH-dependent 7-cyano-7-deazaguanine reductase of Chlorobium phaeovibrioides (strain DSM 265 / 1930) (Prosthecochloris vibrioformis (strain DSM 265)).